A 329-amino-acid chain; its full sequence is Malate dehydrogenase (329 aa).

12 to 18 (GAAGQIG) serves as a coordination point for NAD(+). Positions 95 and 101 each coordinate substrate. NAD(+)-binding positions include asparagine 108, glutamine 115, and 132–134 (VGN). The substrate site is built by asparagine 134 and arginine 165. The Proton acceptor role is filled by histidine 190.

The protein belongs to the LDH/MDH superfamily. MDH type 2 family.

It carries out the reaction (S)-malate + NAD(+) = oxaloacetate + NADH + H(+). In terms of biological role, catalyzes the reversible oxidation of malate to oxaloacetate. In Bordetella bronchiseptica (strain ATCC BAA-588 / NCTC 13252 / RB50) (Alcaligenes bronchisepticus), this protein is Malate dehydrogenase.